We begin with the raw amino-acid sequence, 176 residues long: Inner membrane-spanning protein YciB (176 aa).

The next 6 helical transmembrane spans lie at 3 to 23, 24 to 44, 49 to 69, 72 to 92, 121 to 141, and 149 to 169; these read FLFD…WGIF, TATA…AFRH, TMLW…LVLH, KFIQ…LLAA, VAWA…VHNF, and FKLF…SLWL.

The protein belongs to the YciB family.

The protein resides in the cell inner membrane. Its function is as follows. Plays a role in cell envelope biogenesis, maintenance of cell envelope integrity and membrane homeostasis. This chain is Inner membrane-spanning protein YciB, found in Burkholderia orbicola (strain MC0-3).